The sequence spans 1687 residues: PH domain leucine-rich repeat-containing protein phosphatase 1 (1687 aa).

Methionine 1 carries the N-acetylmethionine modification. Disordered regions lie at residues 1–96 and 230–406; these read MEPA…GGGA and AAAP…AAPD. Positions 78 to 96 are enriched in low complexity; sequence APQPAAGGAAPVPAAGGGA. Serine 286 carries the post-translational modification Phosphoserine. The segment covering 314-326 has biased composition (polar residues); sequence DTESFSLSPSAES. Serine 372 bears the Phosphoserine mark. Residues 492–592 enclose the PH domain; it reads RIQLSGMYNV…WLRQVSKVAS (101 aa). 21 LRR repeats span residues 594-615, 617-638, 648-669, 671-692, 694-715, 717-739, 740-760, 764-785, 788-809, 829-850, 851-872, 874-895, 897-918, 919-940, 943-964, 969-989, 993-1014, 1017-1038, 1040-1061, 1062-1083, and 1085-1106; these read RISS…LFYS, DLTH…PAAR, KLKS…VCSI, TLAE…VGDM, NLQT…LESM, QLSY…EKLT, AVDK…QALR, HIKH…EVDF, HVTQ…IFNN, FLKA…PVPN, YLSY…VCES, KLEV…LFCN, SLRK…LERT, SVEV…LLMK, SLRF…TLSE, ILQE…PLLT, RLKI…KMAK, ELEE…IMNC, RMHT…MQLP, EVKC…ENLP, and KLQE…SLEL. In terms of domain architecture, PPM-type phosphatase spans 1131–1378; it reads SHGYTEASGV…DSISAVVVQL (248 aa). 4 residues coordinate Mn(2+): aspartate 1166, glycine 1167, lysine 1330, and aspartate 1369. 2 disordered regions span residues 1414–1465 and 1604–1687; these read DRPS…SSPA and PGGY…DTPL. Over residues 1424–1445 the composition is skewed to low complexity; that stretch reads SSSSGMASEISSELSTSEMSSE. The segment covering 1649–1669 has biased composition (pro residues); that stretch reads LPPPPQPPQPQPQPQPQPQPQ. A PDZ-binding motif is present at residues 1685-1687; that stretch reads TPL.

Interacts with the nucleotide free form of K-Ras (KRAS) via its LRR repeats. Interacts with AKT2, AKT3 and PRKCB. Interacts with WDR48 and USP12. Requires Mn(2+) as cofactor. Isoforms 1 and 2 are expressed in the retina.

It is found in the cytoplasm. It localises to the membrane. The protein resides in the nucleus. The enzyme catalyses O-phospho-L-seryl-[protein] + H2O = L-seryl-[protein] + phosphate. It carries out the reaction O-phospho-L-threonyl-[protein] + H2O = L-threonyl-[protein] + phosphate. Insensitive to okadaic acid. Deubiquitination by WDR48-USP12 complex positively regulates PHLPP1 stability. Functionally, protein phosphatase involved in regulation of Akt and PKC signaling. Mediates dephosphorylation in the C-terminal domain hydrophobic motif of members of the AGC Ser/Thr protein kinase family; specifically acts on 'Ser-473' of AKT2 and AKT3, 'Ser-660' of PRKCB and 'Ser-657' of PRKCA. Isoform 2 seems to have a major role in regulating Akt signaling in hippocampal neurons. Akt regulates the balance between cell survival and apoptosis through a cascade that primarily alters the function of transcription factors that regulate pro- and antiapoptotic genes. Dephosphorylation of 'Ser-473' of Akt triggers apoptosis and suppression of tumor growth. Dephosphorylation of PRKCA and PRKCB leads to their destabilization and degradation. Dephosphorylates STK4 on 'Thr-387' leading to STK4 activation and apoptosis. Dephosphorylates RPS6KB1 and is involved in regulation of cap-dependent translation. Inhibits cancer cell proliferation and may act as a tumor suppressor. Dephosphorylates RAF1 inhibiting its kinase activity. May act as a negative regulator of K-Ras signaling in membrane rafts. Involved in the hippocampus-dependent long-term memory formation. Involved in circadian control by regulating the consolidation of circadian periodicity after resetting. Involved in development and function of regulatory T-cells. The protein is PH domain leucine-rich repeat-containing protein phosphatase 1 (Phlpp1) of Mus musculus (Mouse).